We begin with the raw amino-acid sequence, 199 residues long: MFRLLKRACSFLLLFVIYQSFVIHHNVQRVLAYKPMVEKTLAENDTKANVDLVLAMIYTETKGGEADVMQSSESSSGQKNSITDSQASIEHGVNLLSHNLALAEEAGVDSWTAVQAYNFGTAYIDYIAKHGGQNTVDLATTYSKTVVAPSLGNTSGQTYFYYHPLALISGGKLYKNGGNIYYSREVHFNLYLIELMSLF.

It is found in the cell surface. The polypeptide is Pneumococcal vaccine antigen A homolog (pvaA) (Streptococcus pyogenes serotype M18 (strain MGAS8232)).